The following is a 327-amino-acid chain: Alkanal monooxygenase beta chain (327 aa).

The protein belongs to the bacterial luciferase oxidoreductase family. As to quaternary structure, heterodimer of an alpha and a beta chain.

The enzyme catalyses a long-chain fatty aldehyde + FMNH2 + O2 = a long-chain fatty acid + hnu + FMN + H2O + 2 H(+). Light-emitting reaction in luminous bacteria. The specific role of the beta subunit is unknown, but it is absolutely required for bioluminescence activity. The polypeptide is Alkanal monooxygenase beta chain (luxB) (Photorhabdus luminescens (Xenorhabdus luminescens)).